The chain runs to 412 residues: Hyaluronidase-3 (412 aa).

The N-terminal stretch at 1–22 (MITQLGLTLVVGLTLCLVHVQA) is a signal peptide. Intrachain disulfides connect Cys42/Cys332, Cys206/Cys221, Cys357/Cys368, Cys362/Cys396, and Cys398/Cys407. Asn69 is a glycosylation site (N-linked (GlcNAc...) asparagine). Glu129 functions as the Proton donor in the catalytic mechanism. N-linked (GlcNAc...) asparagine glycosylation occurs at Asn216. In terms of domain architecture, EGF-like spans 353–408 (AATACSHQRCHGHGRCSWKDPGQMEAFLHLQPDDNLGAWKSFRCRCYLGWSGPTCL).

The protein belongs to the glycosyl hydrolase 56 family. Post-translationally, N-glycosylated.

The protein localises to the secreted. The protein resides in the cell membrane. It is found in the cytoplasmic vesicle. Its subcellular location is the secretory vesicle. It localises to the acrosome. The protein localises to the endoplasmic reticulum. The protein resides in the early endosome. It catalyses the reaction Random hydrolysis of (1-&gt;4)-linkages between N-acetyl-beta-D-glucosamine and D-glucuronate residues in hyaluronate.. In terms of biological role, facilitates sperm penetration into the layer of cumulus cells surrounding the egg by digesting hyaluronic acid. Involved in induction of the acrosome reaction in the sperm. Involved in follicular atresia, the breakdown of immature ovarian follicles that are not selected to ovulate. Induces ovarian granulosa cell apoptosis, possibly via apoptotic signaling pathway involving CASP8 and CASP3 activation, and poly(ADP-ribose) polymerase (PARP) cleavage. Has no hyaluronidase activity in embryonic fibroblasts in vitro. Has no hyaluronidase activity in granulosa cells in vitro. This chain is Hyaluronidase-3 (Hyal3), found in Rattus norvegicus (Rat).